A 95-amino-acid polypeptide reads, in one-letter code: Co-chaperonin GroES (95 aa).

The protein belongs to the GroES chaperonin family. As to quaternary structure, heptamer of 7 subunits arranged in a ring. Interacts with the chaperonin GroEL.

The protein resides in the cytoplasm. Functionally, together with the chaperonin GroEL, plays an essential role in assisting protein folding. The GroEL-GroES system forms a nano-cage that allows encapsulation of the non-native substrate proteins and provides a physical environment optimized to promote and accelerate protein folding. GroES binds to the apical surface of the GroEL ring, thereby capping the opening of the GroEL channel. This is Co-chaperonin GroES from Dichelobacter nodosus (strain VCS1703A).